The primary structure comprises 194 residues: Large ribosomal subunit protein bL25 (194 aa).

This sequence belongs to the bacterial ribosomal protein bL25 family. CTC subfamily. As to quaternary structure, part of the 50S ribosomal subunit; part of the 5S rRNA/L5/L18/L25 subcomplex. Contacts the 5S rRNA. Binds to the 5S rRNA independently of L5 and L18.

In terms of biological role, this is one of the proteins that binds to the 5S RNA in the ribosome where it forms part of the central protuberance. This Thermobifida fusca (strain YX) protein is Large ribosomal subunit protein bL25.